A 142-amino-acid chain; its full sequence is Transcriptional regulator MraZ (142 aa).

2 SpoVT-AbrB domains span residues 5–51 (ASAL…PRPE) and 77–120 (AMDV…DAQT).

It belongs to the MraZ family. In terms of assembly, forms oligomers.

It is found in the cytoplasm. It localises to the nucleoid. In Paraburkholderia xenovorans (strain LB400), this protein is Transcriptional regulator MraZ.